Here is a 792-residue protein sequence, read N- to C-terminus: Cadherin-11 (792 aa).

Positions 1–22 (MKEDNCLHAALICLGMLYYSHA) are cleaved as a signal peptide. A propeptide spanning residues 23-53 (ITTEKLNHVRPSLHGHHEKGKEGQVLHRSKR) is cleaved from the precursor. 5 Cadherin domains span residues 54–159 (GWVW…PPEF), 160–268 (LHEN…PPKF), 269–383 (PQSV…PPVF), 384–486 (LKPS…DNAP), and 487–608 (KFAA…YILN). Residues 54-613 (GWVWNQFFVI…AYILNAGLST (560 aa)) lie on the Extracellular side of the membrane. 3 N-linked (GlcNAc...) asparagine glycosylation sites follow: asparagine 455, asparagine 536, and asparagine 594. The chain crosses the membrane as a helical span at residues 614–634 (GALIAILACIVILLVIVVLFV). Topologically, residues 635 to 792 (TLKRQKKEPL…GSKDTFDDDS (158 aa)) are cytoplasmic.

The protein resides in the cell membrane. Functionally, cadherins are calcium-dependent cell adhesion proteins. They preferentially interact with themselves in a homophilic manner in connecting cells; cadherins may thus contribute to the sorting of heterogeneous cell types. Required for proper focal adhesion assembly. Involved in the regulation of cell migration. The chain is Cadherin-11 (CDH11) from Gallus gallus (Chicken).